The sequence spans 967 residues: Muscular LMNA-interacting protein (967 aa).

The residue at position 129 (Ser129) is a Phosphoserine. 7 disordered regions span residues 132–154, 302–336, 432–462, 506–628, 644–685, 786–838, and 929–967; these read EDEATCRQGEQGPPGGPGNIATR, GLASEAQKKMSTSNVLNPKEDVRTCPAPASGASLT, QKVKQTPPTSKKSLSSGSLTTGSTEQEHQAS, GSTL…SASH, QTLQ…TPSL, SMHS…SQLT, and FSVRDEQEKSPTLLSQDTYNKLGHPMVTIPEHDTLDSKE. The interval 144–811 is required for interaction with ISL1; it reads PPGGPGNIAT…GSETIKTPTT (668 aa). Low complexity predominate over residues 437 to 455; that stretch reads TPPTSKKSLSSGSLTTGST. A compositionally biased stretch (polar residues) spans 508 to 523; that stretch reads TLRSNTTSPQPQTDTF. Low complexity predominate over residues 528–541; the sequence is VPSVTPVLSPLSSS. The span at 543-556 shows a compositional bias: basic and acidic residues; the sequence is GRKDGDSRTPEKNR. 2 stretches are compositionally biased toward polar residues: residues 558 to 567 and 658 to 685; these read ICIQPSTLAS and GSATCPSRTQMPENTASNHSSRVSTPSL. Phosphoserine is present on Ser792. Polar residues predominate over residues 800–811; it reads MLGSETIKTPTT. Positions 826–835 are enriched in low complexity; sequence SSSSSTASES. Polar residues predominate over residues 938–947; it reads SPTLLSQDTY. Basic and acidic residues predominate over residues 958–967; the sequence is PEHDTLDSKE.

Directly interacts with LMNA. Interacts with ISL1 (via N-terminal domain); the interaction represses ISL1 transactivator activity. Interactions of ISL1 with MLIP1 and GCN5/KAT2A may be mutually exclusive. Post-translationally, may be ubiquitinated by UBE3C ubiquitin ligase; ubiquitination is followed by protein degradation. In terms of tissue distribution, predominantly expressed in the heart and skeletal muscle, but detected at lower levels in the lung and brain (at protein level). Also detected in smooth muscle, thymus and kidney. In brain, expressed by a subpopulation of cells within the hippocampus and cortex. In heart, expressed by cardiomyocytes. Expression is reduced in hypertrophic hearts at the transcript level. However, expression in hypertrophic hearts induced by transverse aortic constriction do not differ from control at the protein level.

It localises to the nucleus. It is found in the nucleus envelope. The protein resides in the PML body. Its subcellular location is the cytoplasm. The protein localises to the cytosol. It localises to the cell membrane. It is found in the sarcolemma. Its function is as follows. Required for myoblast differentiation into myotubes, possibly acting as a transcriptional regulator of the myogenic program. Required for cardiac adaptation to stress through integrated regulation of the AKT/mTOR pathways and FOXO1. Regulates cardiac homeostasis and plays a role in the protection against cardiac hypertrophy. Binds chromatin. May act as a transcriptional cofactor for ISL1, repressing its transcriptional activity. May also repress MYOCD transcriptional activity. This chain is Muscular LMNA-interacting protein, found in Mus musculus (Mouse).